The sequence spans 309 residues: Mitochondrial brown fat uncoupling protein 1 (309 aa).

Residues 1 to 10 are Mitochondrial intermembrane-facing; that stretch reads MLRAPGSDAP. Residues 11–32 traverse the membrane as a helical segment; it reads PTLSVRIAAAAGAACLADMITF. Solcar repeat units lie at residues 11-104, 113-203, and 212-297; these read PTLS…VREW, ASLG…MKEA, and DDLP…LKRE. Topologically, residues 33 to 75 are mitochondrial matrix; it reads PLDTAKVRLQIQGEGQGQPPRAPRYRGVLGTVATLARTEGLQK. R58 serves as a coordination point for fatty acid 16:0. The helical transmembrane segment at 76-98 threads the bilayer; sequence LYSGLPAGLQRQVGFASLRIGLY. The Mitochondrial intermembrane segment spans residues 99–118; it reads DSVREWLSPGQGAAASLGSR. The helical transmembrane segment at 119–135 threads the bilayer; that stretch reads ISAGVMTGGAAVFIGQP. Topologically, residues 136–180 are mitochondrial matrix; sequence TEVVKVRLQAQSHLHGRKPRYTGTYNAYRIIATTEGLTGLWKGTT. Residues 181 to 197 traverse the membrane as a helical segment; that stretch reads PNLMRNVIINCTELVTY. Over 198–214 the chain is Mitochondrial intermembrane; it reads DLMKEALVKNHLLADDL. Residues 215–234 form a helical membrane-spanning segment; the sequence is PCHFLSALVAGFCTTVLSSP. Residues 235-268 are Mitochondrial matrix-facing; sequence VDVVKTRFVNSVPEQYTSVPNCAMTMLTKEGPLA. C256 carries the post-translational modification Cysteine sulfenic acid (-SOH). Residues 269–291 traverse the membrane as a helical segment; that stretch reads FFKGFVPSFLRLGSWNVIMFVCF. Position 271 (K271) interacts with fatty acid 16:0. Residues 292–309 lie on the Mitochondrial intermembrane side of the membrane; that stretch reads EQLKRELMKSGRTVDCAT.

It belongs to the mitochondrial carrier (TC 2.A.29) family. As to quaternary structure, most probably functions as a monomer. Binds one purine nucleotide per monomer. However, has also been suggested to function as a homodimer or a homotetramer. Tightly associates with cardiolipin in the mitochondrion inner membrane; may stabilize and regulate its activity. In terms of processing, may undergo sulfenylation upon cold exposure. May increase the sensitivity of UCP1 thermogenic function to the activation by noradrenaline probably through structural effects. Post-translationally, may undergo ubiquitin-mediated proteasomal degradation.

The protein resides in the mitochondrion inner membrane. It catalyses the reaction H(+)(in) = H(+)(out). With respect to regulation, has no constitutive proton transporter activity and has to be activated by long-chain fatty acids/LCFAs. Inhibited by purine nucleotides. Both purine nucleotides and LCFAs bind the cytosolic side of the transporter and directly compete to activate or inhibit it. Activated by noradrenaline and reactive oxygen species. Despite lacking canonical translational encoding for selenocysteine, a small pool of the protein has been observed to selectively incorporate selenocysteine at 'Cys-256'. Selenocysteine-modified protein is highly sensitive to redox modification and may constitute a pool of protein highly sensitive to activation by elevated levels of reactive oxygen species (ROS). Mitochondrial protein responsible for thermogenic respiration, a specialized capacity of brown adipose tissue and beige fat that participates in non-shivering adaptive thermogenesis to temperature and diet variations and more generally to the regulation of energy balance. Functions as a long-chain fatty acid/LCFA and proton symporter, simultaneously transporting one LCFA and one proton through the inner mitochondrial membrane. However, LCFAs remaining associated with the transporter via their hydrophobic tails, it results in an apparent transport of protons activated by LCFAs. Thereby, dissipates the mitochondrial proton gradient and converts the energy of substrate oxydation into heat instead of ATP. Regulates the production of reactive oxygen species/ROS by mitochondria. This Canis lupus familiaris (Dog) protein is Mitochondrial brown fat uncoupling protein 1.